A 1786-amino-acid chain; its full sequence is Protein TIC 214 (1786 aa).

6 helical membrane-spanning segments follow: residues 19 to 39 (IINS…FSIG), 68 to 88 (FIAG…HLAL), 91 to 111 (PHTI…WNNH), 133 to 153 (VFLN…SSML), 176 to 196 (VGWL…LVWI), and 227 to 247 (IFSI…PSPI). Residues 1007 to 1046 (SLSEKKIKNLIDRKKTIRNQIEEISKEKQNLTNSCTKLRY) adopt a coiled-coil conformation.

This sequence belongs to the TIC214 family. Part of the Tic complex. Component of the 1-MD complex, composed of TIC20-I, TIC214, TIC100 and TIC56. Interacts with the translocating preproteins. Hydrolysis of ATP is essential for the formation of this complex. The 1-MD complex interacts with TIC21.

It localises to the plastid. Its subcellular location is the chloroplast inner membrane. Functionally, involved in protein precursor import into chloroplasts. May be part of an intermediate translocation complex acting as a protein-conducting channel at the inner envelope. The protein is Protein TIC 214 of Arabidopsis thaliana (Mouse-ear cress).